The primary structure comprises 591 residues: Autotransporter adhesin NhhA (591 aa).

An N-terminal signal peptide occupies residues 1–51; that stretch reads MNKIYRIIWNSALNAWVVVSELTRNHTKRASATVKTAVLATLLFATVQASA. The tract at residues 52 to 503 is surface exposed passenger domain; the sequence is NNEEQEEDLY…TNVAQLKGVA (452 aa). The tract at residues 504–591 is translocator domain; the sequence is QNLNNRIDNV…GASASVGYQW (88 aa). 4 consecutive transmembrane segments (beta stranded) span residues 537-547, 551-561, 570-576, and 580-591; these read GKSMMAIGGGT, EAGYAIGYSSI, KGTASGN, and HFGASASVGYQW.

The protein belongs to the autotransporter-2 (AT-2) (TC 1.B.40) family. In terms of assembly, homotrimer.

It localises to the cell surface. The protein resides in the cell outer membrane. Involved in adhesion of capsulated meningococci to host epithelial cells. Interacts with laminin and heparan sulfate, promoting the adherence to the extracellular matrix (ECM) components. The polypeptide is Autotransporter adhesin NhhA (Neisseria meningitidis serogroup B (strain ATCC BAA-335 / MC58)).